The sequence spans 342 residues: Cytochrome f (342 aa).

Residues 1–28 (MKKQWIAGAFGLTAALAGLVSVPQSALA) form the signal peptide. The heme site is built by Cys-48, Cys-51, and His-52. A helical transmembrane segment spans residues 305–325 (VTWLVAFLAAAFICQLLLVLK).

It belongs to the cytochrome f family. In terms of assembly, the 4 large subunits of the cytochrome b6-f complex are cytochrome b6, subunit IV (17 kDa polypeptide, PetD), cytochrome f and the Rieske protein, while the 4 small subunits are PetG, PetL, PetM and PetN. The complex functions as a dimer. Requires heme as cofactor.

It localises to the cell inner membrane. Its function is as follows. Component of the cytochrome b6-f complex, which mediates electron transfer between photosystem II (PSII) and photosystem I (PSI), cyclic electron flow around PSI, and state transitions. The sequence is that of Cytochrome f (petA) from Gloeobacter violaceus (strain ATCC 29082 / PCC 7421).